The sequence spans 515 residues: tRNA-2-methylthio-N(6)-dimethylallyladenosine synthase (515 aa).

Residues 25–140 form the MTTase N-terminal domain; it reads KTYQVRTFGC…LPALLNRARH (116 aa). Residues C34, C69, C103, C177, C181, and C184 each contribute to the [4Fe-4S] cluster site. The 231-residue stretch at 163–393 folds into the Radical SAM core domain; sequence RDSVYAGWVS…TALQDRIAAE (231 aa). The TRAM domain occupies 396 to 466; it reads AKQLGRKVEV…AFHLVADPAG (71 aa). The disordered stretch occupies residues 482–515; it reads DRSQADSCGVPAAGAASGKAGVSLGMPSLPTRRA. Over residues 490–506 the composition is skewed to low complexity; sequence GVPAAGAASGKAGVSLG.

Belongs to the methylthiotransferase family. MiaB subfamily. In terms of assembly, monomer. The cofactor is [4Fe-4S] cluster.

It localises to the cytoplasm. The catalysed reaction is N(6)-dimethylallyladenosine(37) in tRNA + (sulfur carrier)-SH + AH2 + 2 S-adenosyl-L-methionine = 2-methylsulfanyl-N(6)-dimethylallyladenosine(37) in tRNA + (sulfur carrier)-H + 5'-deoxyadenosine + L-methionine + A + S-adenosyl-L-homocysteine + 2 H(+). Functionally, catalyzes the methylthiolation of N6-(dimethylallyl)adenosine (i(6)A), leading to the formation of 2-methylthio-N6-(dimethylallyl)adenosine (ms(2)i(6)A) at position 37 in tRNAs that read codons beginning with uridine. This chain is tRNA-2-methylthio-N(6)-dimethylallyladenosine synthase, found in Paenarthrobacter aurescens (strain TC1).